Reading from the N-terminus, the 254-residue chain is L-arabinose 1-dehydrogenase (NAD(P)(+)) (254 aa).

The active-site Proton acceptor is the Tyr142. NAD(+)-binding residues include Tyr142 and Lys146.

It belongs to the NAD(P)-dependent epimerase/dehydratase family. As to quaternary structure, homotetramer.

It carries out the reaction alpha-L-arabinopyanose + NAD(+) = L-arabinono-1,4-lactone + NADH + H(+). It catalyses the reaction alpha-L-arabinopyanose + NADP(+) = L-arabinono-1,4-lactone + NADPH + H(+). It functions in the pathway carbohydrate degradation; L-arabinose degradation via L-arabinono-1,4-lactone pathway. L-AraDH initiates the degradation of L-arabinose. Catalyzes the NAD(P)(+)-dependent conversion of L-arabinose to L-arabino-gamma-lactone. It is highly specific for L-arabinose as substrate and can use both NADP(+) and NAD(+) as electron acceptor, with a slight preference for NADP(+). The sequence is that of L-arabinose 1-dehydrogenase (NAD(P)(+)) from Haloferax volcanii (strain ATCC 29605 / DSM 3757 / JCM 8879 / NBRC 14742 / NCIMB 2012 / VKM B-1768 / DS2) (Halobacterium volcanii).